A 164-amino-acid chain; its full sequence is Putative histone H2B type 2-D (164 aa).

Low complexity predominate over residues Met1–Lys12. A disordered region spans residues Met1–Ser33. The residue at position 2 (Pro2) is an N-acetylproline. Position 6 is an N6-(2-hydroxyisobutyryl)lysine; alternate (Lys6). An N6-(beta-hydroxybutyryl)lysine; alternate mark is found at Lys6 and Lys12. 3 positions are modified to N6-acetyllysine; alternate: Lys6, Lys12, and Lys13. Lys6 carries the post-translational modification N6-butyryllysine; alternate. Residues Lys6, Lys12, and Lys13 each carry the N6-crotonyllysine; alternate modification. N6-lactoyllysine; alternate occurs at positions 6 and 12. Lys6 is covalently cross-linked (Glycyl lysine isopeptide (Lys-Gly) (interchain with G-Cter in SUMO2); alternate). At Lys13 the chain carries N6-(2-hydroxyisobutyryl)lysine; alternate. Ser15 is subject to Phosphoserine; by STK4/MST1. N6-acetyllysine; alternate is present on residues Lys16, Lys17, Lys21, and Lys24. An N6-crotonyllysine; alternate mark is found at Lys16, Lys17, Lys21, and Lys24. An N6-lactoyllysine; alternate mark is found at Lys16, Lys17, Lys21, and Lys24. Residues Lys17 and Lys21 each carry the N6-(beta-hydroxybutyryl)lysine; alternate modification. Lys17 carries the N6-glutaryllysine; alternate modification. N6-(2-hydroxyisobutyryl)lysine; alternate occurs at positions 21 and 24. Position 21 is an N6-butyryllysine; alternate (Lys21). Residue Lys21 forms a Glycyl lysine isopeptide (Lys-Gly) (interchain with G-Cter in SUMO2); alternate linkage. Position 25 is an N6-(2-hydroxyisobutyryl)lysine (Lys25). Position 35 is an N6-(2-hydroxyisobutyryl)lysine; alternate (Lys35). Position 35 is an N6-(beta-hydroxybutyryl)lysine; alternate (Lys35). Position 35 is an N6-crotonyllysine; alternate (Lys35). Lys35 carries the N6-glutaryllysine; alternate modification. N6-succinyllysine; alternate is present on Lys35. Residue Lys35 forms a Glycyl lysine isopeptide (Lys-Gly) (interchain with G-Cter in ubiquitin); alternate linkage. Phosphoserine; by AMPK is present on Ser37. N6-(2-hydroxyisobutyryl)lysine; alternate occurs at positions 44, 47, and 58. Lys44 bears the N6-lactoyllysine; alternate mark. N6-glutaryllysine; alternate is present on residues Lys44 and Lys47. Lys47 is subject to N6-methyllysine; alternate. The residue at position 58 (Lys58) is an N6,N6-dimethyllysine; alternate. The residue at position 80 (Arg80) is a Dimethylated arginine. Lys86 carries the post-translational modification N6-(2-hydroxyisobutyryl)lysine; alternate. The residue at position 86 (Lys86) is an N6-(beta-hydroxybutyryl)lysine; alternate. An N6-acetyllysine; alternate modification is found at Lys86. Lys86 carries the post-translational modification N6-lactoyllysine; alternate. Lys86 carries the post-translational modification N6,N6,N6-trimethyllysine; alternate. Omega-N-methylarginine is present on residues Arg87 and Arg93. The segment at Pro111–Ser140 is disordered.

It belongs to the histone H2B family. As to quaternary structure, the nucleosome is a histone octamer containing two molecules each of H2A, H2B, H3 and H4 assembled in one H3-H4 heterotetramer and two H2A-H2B heterodimers. The octamer wraps approximately 147 bp of DNA. In terms of processing, phosphorylation at Ser-37 (H2BS36ph) by AMPK in response to stress promotes transcription. Phosphorylated on Ser-15 (H2BS14ph) by STK4/MST1 during apoptosis; which facilitates apoptotic chromatin condensation. Also phosphorylated on Ser-15 in response to DNA double strand breaks (DSBs), and in correlation with somatic hypermutation and immunoglobulin class-switch recombination. Crotonylation (Kcr) is specifically present in male germ cells and marks testis-specific genes in post-meiotic cells, including X-linked genes that escape sex chromosome inactivation in haploid cells. Crotonylation marks active promoters and enhancers and confers resistance to transcriptional repressors. It is also associated with post-meiotically activated genes on autosomes. Post-translationally, lactylated in macrophages by EP300/P300 by using lactoyl-CoA directly derived from endogenous or exogenous lactate, leading to stimulates gene transcription.

Its subcellular location is the nucleus. The protein localises to the chromosome. Core component of nucleosome. Nucleosomes wrap and compact DNA into chromatin, limiting DNA accessibility to the cellular machineries which require DNA as a template. Histones thereby play a central role in transcription regulation, DNA repair, DNA replication and chromosomal stability. DNA accessibility is regulated via a complex set of post-translational modifications of histones, also called histone code, and nucleosome remodeling. The chain is Putative histone H2B type 2-D from Homo sapiens (Human).